A 470-amino-acid polypeptide reads, in one-letter code: Transcription factor SOX-8 (470 aa).

Over residues 1–12 (MLNMTEEHDKAL) the composition is skewed to basic and acidic residues. Residues 1 to 60 (MLNMTEEHDKALEAPCSPAGTTSSMSHVDSDSDSPLSPAGSEGLGCAPAPAPRPPGAAPL) are disordered. Positions 67–107 (AEVDERFPACIRDAVSQVLKGYDWSLVPMPVRGNGSLKAKP) are dimerization (DIM). Positions 109–177 (VKRPMNAFMV…QHKKDHPDYK (69 aa)) form a DNA-binding region, HMG box. 3 stretches are compositionally biased toward basic and acidic residues: residues 163-178 (ERLR…DYKY), 219-228 (DGHHHGEHAG), and 242-257 (TDLH…HEGR). Disordered stretches follow at residues 163-257 (ERLR…HEGR) and 327-381 (AGGA…DYGS). The segment at 233–308 (PPTPPTTPKT…LNGHTAMPAD (76 aa)) is transactivation domain (TAM). The segment covering 338-349 (SPASASPSSADS) has biased composition (low complexity). The segment at 353-470 (RPHIKTEQLS…QPVYTTLTRP (118 aa)) is transactivation domain (TAC). Positions 359–372 (EQLSPSHYSDQSHG) are enriched in polar residues. The 9aaTAD motif lies at 424 to 432 (SSIYQYPYF).

As to expression, widely expressed in the embryo.

It localises to the nucleus. Its function is as follows. Transcription factor that may play a role in central nervous system, limb and facial development. May be involved in male sex determination. Binds the consensus motif 5'-[AT][AT]CAA[AT]G-3'. This is Transcription factor SOX-8 (SOX8) from Gallus gallus (Chicken).